The primary structure comprises 134 residues: Endoribonuclease YbeY (134 aa).

The Zn(2+) site is built by H94, H98, and H104.

The protein belongs to the endoribonuclease YbeY family. The cofactor is Zn(2+).

The protein localises to the cytoplasm. In terms of biological role, single strand-specific metallo-endoribonuclease involved in late-stage 70S ribosome quality control and in maturation of the 3' terminus of the 16S rRNA. The protein is Endoribonuclease YbeY of Campylobacter jejuni subsp. jejuni serotype O:23/36 (strain 81-176).